We begin with the raw amino-acid sequence, 248 residues long: Chromatin target of PRMT1 protein (248 aa).

Residue Ala2 is modified to N-acetylalanine. 3 positions are modified to phosphoserine: Ser40, Ser49, and Ser64. Lys70 is covalently cross-linked (Glycyl lysine isopeptide (Lys-Gly) (interchain with G-Cter in SUMO2)). A disordered region spans residues 151 to 204 (LRRGGVRGRGGPGRGGLGRGAMGRGGIGGRGRGMIGRGRGGFGGRGRGRGRGRG). An interaction with PRMT1 region spans residues 153-206 (RGGVRGRGGPGRGGLGRGAMGRGGIGGRGRGMIGRGRGGFGGRGRGRGRGRGAL). Gly residues predominate over residues 157-195 (RGRGGPGRGGLGRGAMGRGGIGGRGRGMIGRGRGGFGGR). Residues 194–203 (GRGRGRGRGR) carry the GAR motif; involved in 5hmC binding motif. Thr242 is modified (phosphothreonine).

Interacts with PRMT1 and PRMT5. Interacts with the 5FMC complex; the interaction is methylation-dependent. Interacts with FYTTD1, SET and PRC1 complex members CBX4, RNF2 and PHC2; the interactions are methylation-independent. Interacts with ZNF148. Interacts with WDR77 and ER. In terms of processing, asymmetrically methylated by PRMT1. Symmetrically methylated by PRMT5.

The protein resides in the nucleus. Its subcellular location is the nucleolus. It is found in the nucleoplasm. It localises to the nucleus speckle. In terms of biological role, plays an important role in the ligand-dependent activation of estrogen receptor target genes. May play a role in the silencing of fetal globin genes. Recruits the 5FMC complex to ZNF148, leading to desumoylation of ZNF148 and subsequent transactivation of ZNF148 target genes. Required for the tumorigenicity of glioblastoma cells. Binds to 5-hydroxymethylcytosine (5hmC) and associates with the methylosome complex containing PRMT1, PRMT5, MEP50 and ERH. The CHTOP-methylosome complex associated with 5hmC methylates H4R3 and transactivates genes involved in glioblastomagenesis. The polypeptide is Chromatin target of PRMT1 protein (CHTOP) (Bos taurus (Bovine)).